The sequence spans 578 residues: Cytochrome P450 monooxygenase fsoE (578 aa).

The helical transmembrane segment at 28–48 threads the bilayer; it reads LLMAVAITYAISWINWFFTSW. Cys517 provides a ligand contact to heme.

This sequence belongs to the cytochrome P450 family. Heme serves as cofactor.

Its subcellular location is the membrane. The catalysed reaction is 3-O-(beta-D-glucopyranosyl)-isomotiol + 2 reduced [NADPH--hemoprotein reductase] + 2 O2 = 2-deacetoxyfuscoatroside + 2 oxidized [NADPH--hemoprotein reductase] + 2 H2O + 3 H(+). It catalyses the reaction 3-O-(beta-D-glucopyranosyl)-2alpha-hydroxyisomotiol + 2 reduced [NADPH--hemoprotein reductase] + 2 O2 = 2-deacetylfuscoatroside + 2 oxidized [NADPH--hemoprotein reductase] + 2 H2O + 3 H(+). The enzyme catalyses 3-O-(beta-D-glucopyranosyl)-2alpha-acetoxyisomotiol + 2 reduced [NADPH--hemoprotein reductase] + 2 O2 = fuscoatroside + 2 oxidized [NADPH--hemoprotein reductase] + 2 H2O + 3 H(+). It carries out the reaction isomotiol + reduced [NADPH--hemoprotein reductase] + O2 = 19beta-hydroxyisomotiol + oxidized [NADPH--hemoprotein reductase] + H2O + H(+). The catalysed reaction is 2alpha-hydroxyisomotiol + reduced [NADPH--hemoprotein reductase] + O2 = 2alpha,19beta-dihydroxyisomotiol + oxidized [NADPH--hemoprotein reductase] + H2O + H(+). It catalyses the reaction 2alpha,19beta-dihydroxyisomotiol + reduced [NADPH--hemoprotein reductase] + O2 = 2alpha-hydroxyismotiol-19-one + oxidized [NADPH--hemoprotein reductase] + 2 H2O + H(+). The enzyme catalyses 2alpha-hydroxyismotiol-19-one + 2 reduced [NADPH--hemoprotein reductase] + O2 = 2-deacetyl,3-deglucopyranosyl-fuscoatroside + 2 oxidized [NADPH--hemoprotein reductase] + H2O + 3 H(+). It participates in secondary metabolite biosynthesis; terpenoid biosynthesis. Cytochrome P450 monooxygenase; part of the gene cluster that mediates the biosynthesis of the enfumafungin-type antibiotic, fuscoatroside. Within the pathway, fsoE catalyzes the oxidative cleavage of the c19-C20 bond within the E-ring, resulting in the formation of a carboxyl group and a methyl group. FsoE exhibits preferential substrate selectivity toward glycoside substrates over their aglycones. The fuscoatroside biosynthesis is initiated by the cyclization of 2,3(S)-oxidosqualene through FsoA's terpene cyclase (TC) domain, leading to the formation of the fernane skeleton isomotiol, harboring a fernane triterpene skeleton with a C8-C9 double bond. Subsequently, C2-alpha-hydroxylation mediated by fsoD results in the production of 2-alpha-hydroxy-isomotiol, which is further acetylated by fsoF. The glycosyltransferase (GT) domain of FsoA may convert isomotiol, 2-alpha-hydroxy-isomotiol, and the acetylated derivative of 2-alpha-hydroxy-isomotiol into their corresponding glycosides 3-O-(beta-D-glucopyranosyl)-isomotiol, 3-O-(beta-D-glucopyranosyl)-2-alpha-hydroxy-isomotiol, and 3-O-(beta-D-glucopyranosyl)-2-alpha-acetoxy-isomotiol, which then undergo oxidative cleavage under the action of fsoE to form s 2-deacetoxy-fuscoatroside, 2-deacetyl-fuscoatroside, and fuscoatroside, respectively. Although hydroxylation followed by acetylation of 3-O-(beta-D-glucopyranosyl)-isomotiol and 2-deacetoxy-fuscoatroside by fsoD and fsoF could not be ruled out, this process is likely to occur with difficulty due to bulky steric hindrance caused by the presence of a glycan at C3 in these compounds. Interestingly, fsoE can also utilize the aglycones isomotiol and 2-alpha-hydroxy-isomotiol as substrates to generate 19-beta-hydroxy-isomotiol and 2-alpha,19-beta-dihydroxy-isomotiol, respectively. These reactions occur with lower efficiency. Finally, fsoE can further convert 2-alpha,19-beta-dihydroxy-isomotiol into 2-alpha-hydroxy-ismotiol-19-one and 2-alpha-hydroxy-ismotiol-19-one into 2-deacetyl-3-deglucopyranosyl-fuscoatroside. This is Cytochrome P450 monooxygenase fsoE from Humicola fuscoatra.